The chain runs to 410 residues: Probable inactive allantoicase (410 aa).

It belongs to the allantoicase family.

In terms of biological role, the function of this enzyme is unclear as allantoicase activity is not known to exist in mammals. The chain is Probable inactive allantoicase (ALLC) from Macaca fascicularis (Crab-eating macaque).